The chain runs to 601 residues: Zinc finger protein 37 (601 aa).

One can recognise a KRAB domain in the interval 1-70; the sequence is MATPEPAESD…VRANKNSSSS (70 aa). A Phosphothreonine modification is found at Thr-3. At Ser-9 the chain carries Phosphoserine. Residues 30 to 43 are compositionally biased toward polar residues; that stretch reads ETCSNPASMGNQDP. The segment at 30–254 is disordered; sequence ETCSNPASMG…SKSDKAPGSG (225 aa). Positions 60-70 are enriched in low complexity; it reads SVRANKNSSSS. Residues 77–88 show a composition bias toward polar residues; sequence TGTSAKVQQDGA. 3 stretches are compositionally biased toward basic and acidic residues: residues 115–136, 164–174, and 183–238; these read KSSE…PSEK, KKPDTANEYRK, and VNRD…EKRK. Residues 257 to 279 form a C2H2-type 1 zinc finger; it reads YECNQCGKVLSHKQGLLDHQRTH. The C2H2-type 2; atypical zinc-finger motif lies at 285–303; sequence YECYECGIAFSQKSHLVVH. 10 consecutive C2H2-type zinc fingers follow at residues 314-337, 343-365, 371-393, 399-421, 427-449, 455-477, 483-505, 511-533, 539-561, and 570-592; these read YECV…RISH, YKCN…IRSH, YECK…VRTH, YECN…MRIH, FECT…QRTH, YKCK…MRTH, FECN…QRVH, YECV…QRTH, FECY…QRSH, and YECV…MKTH.

It belongs to the krueppel C2H2-type zinc-finger protein family. Expressed in testes, brain, kidney, spleen, thymus, lung, and at low levels in liver.

The protein resides in the nucleus. Functionally, may be involved in transcriptional regulation. This chain is Zinc finger protein 37 (Zfp37), found in Rattus norvegicus (Rat).